The sequence spans 840 residues: Translation initiation factor IF-2 (840 aa).

The span at 95–143 shows a compositional bias: basic and acidic residues; the sequence is RSPDEIEAERQRELEEQRAAEEAERLKAEEAAARQRAEEEARKAEEAAR. Disordered stretches follow at residues 95–155 and 173–256; these read RSPD…ATAG and PAAV…PTGP. Residues 144-155 are compositionally biased toward low complexity; the sequence is AKAAQEAAATAG. Basic and acidic residues-rich tracts occupy residues 175–191 and 223–232; these read AVEE…PKRD and STDEESDGYR. Over residues 233–247 the composition is skewed to basic residues; sequence RGGRGGKSKLKKRNQ. The 170-residue stretch at 340 to 509 folds into the tr-type G domain; sequence TRAPVVTVMG…LLQAEVLELK (170 aa). The G1 stretch occupies residues 349–356; that stretch reads GHVDHGKT. Residue 349–356 coordinates GTP; the sequence is GHVDHGKT. The segment at 374–378 is G2; that stretch reads GITQH. Residues 395–398 form a G3 region; sequence DTPG. Residues 395–399 and 449–452 contribute to the GTP site; these read DTPGH and NKID. A G4 region spans residues 449–452; the sequence is NKID. The interval 485–487 is G5; it reads SAK.

It belongs to the TRAFAC class translation factor GTPase superfamily. Classic translation factor GTPase family. IF-2 subfamily.

It is found in the cytoplasm. One of the essential components for the initiation of protein synthesis. Protects formylmethionyl-tRNA from spontaneous hydrolysis and promotes its binding to the 30S ribosomal subunits. Also involved in the hydrolysis of GTP during the formation of the 70S ribosomal complex. The sequence is that of Translation initiation factor IF-2 from Pseudomonas aeruginosa (strain ATCC 15692 / DSM 22644 / CIP 104116 / JCM 14847 / LMG 12228 / 1C / PRS 101 / PAO1).